A 961-amino-acid chain; its full sequence is Cytochrome b5-like reductase apf12 (961 aa).

Alanine 298 provides a ligand contact to FAD. The FAD-binding FR-type domain occupies alanine 429 to alanine 548. Residues serine 453–glutamine 456, serine 499–lysine 500, and glycine 753 contribute to the NADP(+) site. Residues leucine 716–aspartate 793 enclose the Cytochrome b5 heme-binding domain. Glycine 753–glutamate 755 is a binding site for FAD.

It belongs to the flavoprotein pyridine nucleotide cytochrome reductase family. The cofactor is FAD.

Its pathway is secondary metabolite biosynthesis. Cytochrome b5-like reductase; part of the gene cluster that mediates the biosynthesis of the cyclic tetrapeptide apicidin F (APF). The non-ribosomal peptide synthetase apf1 incorporates four different amino acids to produce apicidin F: L-phenylalanine, D-pipecolic acid (D-pip), N-methoxy-L-tryptophan and L-2-aminooctanedioic acid. L-Phenylalanine is the only proteinogenic amino acid directly used by apf1. The 3 other apf1 substrates are non-proteinogenic and have to be modified by other enzymes of the cluster. Lysine is converted to delta-1-pyrroline-5-carboxylate (P5C) which is reduced to L-pipecolic acid (L-pip) by apf3. L-pip is epimerized to D-pip, probably by apf1 activity, prior to incorporation. L-Tryptophan is N-oxidyzed by one of the cytochrome P450 monooxygenases (apf7 or apf8), and further methylated at the hydroxy group by the O-methyltransferase apf6 to yield N-methoxy-L-tryptophan. The synthesis of the fourth apf1 substrate is more complex. The fatty acid synthase apf5 is involved in the synthesis of the octanoic acid backbone of L-2-aminooctanedioic acid by fixing one acetyl-CoA unit and three malonyl-CoA units. Then one of the cytochrome P450 monooxygenases (apf7 or apf8) may oxidize this backbone to 2-oxooctanoic acid. The aminotransferase apf4 is predicted to catalyze the exchange of the keto group with an amino group. The next step would be the oxidation of 2-aminooctanoic acid by one of the cytochrome P450 monooxygenases (apf7 or apf8). The last step is the oxidation of 2-amino-8-hydroxyoctanoic acid to 2-aminooctanedioic acid is catalyzed by the FAD-dependent monooxygenase apf9. In Gibberella fujikuroi (strain CBS 195.34 / IMI 58289 / NRRL A-6831) (Bakanae and foot rot disease fungus), this protein is Cytochrome b5-like reductase apf12.